A 471-amino-acid polypeptide reads, in one-letter code: Chromosomal replication initiator protein DnaA (471 aa).

Residues 1 to 77 (MELNSSFWTL…YTEISDTYGK (77 aa)) are domain I, interacts with DnaA modulators. Positions 77 to 130 (KPFEVEFSITGNKINSHIETSTTPDEVLSGSEILQAQLARAQNIQPTQPRSSSD) are domain II. The tract at residues 131–349 (TLNSELTFST…GNLKKVKMFS (219 aa)) is domain III, AAA+ region. 4 residues coordinate ATP: Gly176, Gly178, Lys179, and Thr180. A domain IV, binds dsDNA region spans residues 350-471 (ELQGLPIDHE…EQRIHNITRV (122 aa)).

It belongs to the DnaA family. Oligomerizes as a right-handed, spiral filament on DNA at oriC.

It is found in the cytoplasm. Its function is as follows. Plays an essential role in the initiation and regulation of chromosomal replication. ATP-DnaA binds to the origin of replication (oriC) to initiate formation of the DNA replication initiation complex once per cell cycle. Binds the DnaA box (a 9 base pair repeat at the origin) and separates the double-stranded (ds)DNA. Forms a right-handed helical filament on oriC DNA; dsDNA binds to the exterior of the filament while single-stranded (ss)DNA is stabiized in the filament's interior. The ATP-DnaA-oriC complex binds and stabilizes one strand of the AT-rich DNA unwinding element (DUE), permitting loading of DNA polymerase. After initiation quickly degrades to an ADP-DnaA complex that is not apt for DNA replication. Binds acidic phospholipids. The protein is Chromosomal replication initiator protein DnaA of Bdellovibrio bacteriovorus (strain ATCC 15356 / DSM 50701 / NCIMB 9529 / HD100).